The primary structure comprises 482 residues: 2-succinylbenzoate--CoA ligase (482 aa).

Belongs to the ATP-dependent AMP-binding enzyme family. MenE subfamily.

It carries out the reaction 2-succinylbenzoate + ATP + CoA = 2-succinylbenzoyl-CoA + AMP + diphosphate. The protein operates within quinol/quinone metabolism; 1,4-dihydroxy-2-naphthoate biosynthesis; 1,4-dihydroxy-2-naphthoate from chorismate: step 5/7. It functions in the pathway quinol/quinone metabolism; menaquinone biosynthesis. In terms of biological role, converts 2-succinylbenzoate (OSB) to 2-succinylbenzoyl-CoA (OSB-CoA). This Bacillus thuringiensis subsp. konkukian (strain 97-27) protein is 2-succinylbenzoate--CoA ligase.